A 2997-amino-acid chain; its full sequence is Chromodomain-helicase-DNA-binding protein 7 (2997 aa).

A disordered region spans residues 86–144 (PNRMMSNTPGNGLASPHSQYHTPPVPQVPHGGSGGGQMGVYPGMQNERHGQSFVDSSSM). The span at 88–106 (RMMSNTPGNGLASPHSQYH) shows a compositional bias: polar residues. Omega-N-methylarginine is present on Arg148. 5 disordered regions span residues 160–186 (YQQQ…PQHM), 199–287 (SMQQ…AVRP), 375–419 (QMNT…GSAG), 498–816 (GQQH…KQKE), and 938–959 (REPE…SESS). Residues 166–177 (QPQPPQPAPSGP) show a composition bias toward pro residues. 2 stretches are compositionally biased toward polar residues: residues 199 to 224 (SMQQ…NQGN) and 238 to 255 (VPQQ…SVQQ). Arg286 carries the asymmetric dimethylarginine modification. Residues 375–390 (QMNTQTMHPSQPQGTY) show a composition bias toward polar residues. Positions 498 to 510 (GQQHPGQQPSFQQ) are enriched in low complexity. Basic and acidic residues predominate over residues 607 to 620 (VAEDPSKGFGKDDF). Polar residues predominate over residues 627 to 636 (QELNRNSLDG). Ser637 is subject to Phosphoserine. 2 stretches are compositionally biased toward basic and acidic residues: residues 650-682 (KKDP…EPKE) and 717-729 (GKTE…DLDK). A Phosphoserine modification is found at Ser725. A compositionally biased stretch (basic residues) spans 746–758 (QKRRSSRQVKRKR). The segment covering 759 to 769 (YTEDLEFKISD) has biased composition (basic and acidic residues). Residues 782-794 (SPSNTSQSEQQES) are compositionally biased toward polar residues. 2 Chromo domains span residues 800–867 (PVVE…GQNK) and 882–947 (VEVD…RVER). One can recognise a Helicase ATP-binding domain in the interval 980–1154 (LFNWYNMRNC…FSLLHFLEPS (175 aa)). Position 993–1000 (993–1000 (DEMGLGKT)) interacts with ATP. The DEAH box motif lies at 1105–1108 (DEAH). In terms of domain architecture, Helicase C-terminal spans 1294 to 1464 (LIDKLLPKLK…LSKKEIEDLL (171 aa)). Disordered regions lie at residues 1576-1600 (FSDL…KSQG) and 1837-1863 (DMLA…TRTP). Phosphoserine is present on residues Ser1577 and Ser1581. The segment covering 1584 to 1596 (EEKPCAKPRRPQD) has biased composition (basic and acidic residues). The segment covering 1844–1855 (DGGEFDREDEDP) has biased composition (acidic residues). The residue at position 1874 (Ser1874) is a Phosphoserine. 2 stretches are compositionally biased toward basic and acidic residues: residues 2170 to 2189 (QAEG…KCEG) and 2198 to 2207 (GSGKESKQEC). The tract at residues 2170–2290 (QAEGKVEEPE…DETRDGFYME (121 aa)) is disordered. Residues Ser2231, Ser2233, Ser2237, Ser2251, Ser2272, Ser2275, Ser2356, and Ser2395 each carry the phosphoserine modification. Positions 2237–2251 (SEEDEEEKLEDDDKS) are enriched in acidic residues. The stretch at 2401 to 2431 (RRRRRKIEIEAERAAKRRNLMEMVAQLRESQ) forms a coiled coil. Thr2472 is modified (phosphothreonine). Phosphoserine occurs at positions 2533 and 2535. Thr2551 is modified (phosphothreonine). 2 positions are modified to phosphoserine: Ser2559 and Ser2619. Over residues 2823–2832 (ATGNTTTASS) the composition is skewed to low complexity. Disordered stretches follow at residues 2823 to 2872 (ATGN…SANG) and 2935 to 2997 (EEKA…ENDE). Composition is skewed to basic and acidic residues over residues 2839-2849 (STSKGEEKGNE) and 2935-2951 (EEKA…KDGE). Ser2956 and Ser2961 each carry phosphoserine. The span at 2970-2997 (LLEDEIAQGEELDSLDGGDEIENNENDE) shows a compositional bias: acidic residues.

This sequence belongs to the SNF2/RAD54 helicase family. As to quaternary structure, may interact with CTCF. Interacts with CHD8. Interacts with FAM124B. Found in a complex composed of AGO2, CHD7 and ARB2A. Interacts with TLK2. In terms of tissue distribution, widely expressed in fetal and adult tissues.

The protein resides in the nucleus. It localises to the nucleolus. The catalysed reaction is ATP + H2O = ADP + phosphate + H(+). Functionally, ATP-dependent chromatin-remodeling factor, slides nucleosomes along DNA; nucleosome sliding requires ATP. Probable transcription regulator. May be involved in the in 45S precursor rRNA production. The polypeptide is Chromodomain-helicase-DNA-binding protein 7 (CHD7) (Homo sapiens (Human)).